A 302-amino-acid chain; its full sequence is Cuticle collagen dpy-13 (302 aa).

3 triple-helical region regions span residues 106–135, 154–210, and 219–278; these read GPQG…PGKA, GPPG…EGLP, and GEPG…PGTP. The disordered stretch occupies residues 108-284; it reads QGAPGAPGKP…PGTPGERGIC (177 aa). Residues 144-159 are compositionally biased toward pro residues; the sequence is TPPPCKPCPQGPPGAP. The segment covering 188 to 197 has biased composition (low complexity); that stretch reads PKGPNGAPGK. Composition is skewed to pro residues over residues 247–257 and 268–277; these read QPGPKGPPGPD and QPGPVGPPGT.

Belongs to the cuticular collagen family. As to quaternary structure, collagen polypeptide chains are complexed within the cuticle by disulfide bonds and other types of covalent cross-links.

In terms of biological role, nematode cuticles are composed largely of collagen-like proteins. The cuticle functions both as an exoskeleton and as a barrier to protect the worm from its environment. Mutations in dpy-13 affects the body shape. This is Cuticle collagen dpy-13 (dpy-13) from Caenorhabditis elegans.